The chain runs to 118 residues: Integration host factor subunit alpha (118 aa).

A disordered region spans residues 97–118 (NGAMPMSTEESDENTAQSASGG).

It belongs to the bacterial histone-like protein family. Heterodimer of an alpha and a beta chain.

Functionally, this protein is one of the two subunits of integration host factor, a specific DNA-binding protein that functions in genetic recombination as well as in transcriptional and translational control. The sequence is that of Integration host factor subunit alpha from Rhodopseudomonas palustris (strain ATCC BAA-98 / CGA009).